We begin with the raw amino-acid sequence, 533 residues long: MNEENTDGTNGCSKVRTGTQNEAALLALMEKTGYNMVQENGQRKFGGPPPGWEGPPPPRGCEVFVGKIPRDMYEDELVPVFERAGKIYEFRLMMEFSGENRGYAFVMYTTKEEAQLAIRILNNYEIRPGKFIGVCVSLDNCRLFIGAIPKEKKKEEILDEMKKVTEGVVDVIVYPSATDKTKNRGFAFVEYESHRAAAMARRKLIPGTFQLWGHTIQVDWADPEKEVDEETMQRVKVLYVRNLMISTTEETIKAEFSKFKPGAVERVKKLRDYAFVHFFHREDAVAAMSVMNGKCIDGASIEVTLAKPVNKENTWRQHLNGQISPNSENLLVYANKEESHSKSLGKPPTLPTRLNGQHSPSPPEIERCTYPFFPGTKLTPISMYSLKSNHFNSAVMHLDYYCNKNNWAPPEYYLYSTTSQDGKVLLVYKIVIPAIANGSQSYFMPDKLCTTLEDAKELAAQFTLLHLDFNFRRSSINSLSPVSTTLSSGTPSMLPYTSRPSSYPSYPLSPTISLANGSHVGQRLYISNQASFF.

RRM domains are found at residues 61–139, 141–223, and 236–308; these read CEVF…VSLD, CRLF…WADP, and KVLY…LAKP. The tract at residues 338 to 362 is disordered; it reads ESHSKSLGKPPTLPTRLNGQHSPSP.

Interacts with YTHDC2, MEIOC, MOV10, CNOT6L, DDX4, UPF1 and PABPC1. Expressed in the testis and ovary (at protein level). Expressed in spermatogonia and spermatocytes in testis (at protein level).

The protein localises to the cytoplasm. Functionally, essential for male and female fertility, playing a crucial role in regulating germ cell development by ensuring the proper progression of meiosis prophase I. Regulates mitotic-to-meiotic transition in spermatogenesis by forming a complex with MEIOC and YTHDC2 which recognizes and down-regulates mitotic transcripts for a successful meiotic entry. Required for normal synaptonemal complex formation during meiosis, binding meiotic cohesin subunit mRNAs containing GCCUAU/GUUCGA motifs in their 3'UTRs regions and positively regulating their translation. Required for spermatogonial differentiation in both developing and adult testis. This chain is Probable RNA-binding protein 46, found in Mus musculus (Mouse).